The following is a 794-amino-acid chain: Protein SPA1-RELATED 4 (794 aa).

A Protein kinase domain is found at 1–268 (MKGSSESSSR…MSELLQSEFI (268 aa)). Residues 126–165 (SCSDSGSDEDATTKSREIGSSRQEEILSERRSKQQEEVKK) are disordered. Positions 136–165 (ATTKSREIGSSRQEEILSERRSKQQEEVKK) are enriched in basic and acidic residues. Residues 272-326 (RENLEEREAAMELRDRIEEQELLLEFLFLIQQRKQEAADKLQDTISLLSSDIDQV) are a coiled coil. Disordered regions lie at residues 352 to 373 (QGAETTAAEEENDDNSIDEESK) and 428 to 447 (GRSSEKSSMSQPSKDPINDS). Acidic residues predominate over residues 358–369 (AAEEENDDNSID). WD repeat units follow at residues 482-521 (NSSNLVCAIGFDRDGEFFATAGVNKKIKIFECESIIKDGR), 531-571 (ASRS…LVTE), 574-614 (EHEK…SIGT), 616-656 (KTKA…LPLC), 660-698 (GHHKTVSYVRFVDSSTLVSSSTDNTLKLWDLSMSISGIN), 707-746 (GHTNVKNFVGLSVSDGYIATGSETNEVFVYHKAFPMPVLS), and 762-794 (DASQFISSVCWRGQSSTLVAANSTGNIKILEMV). The DWD box signature appears at 635–649 (AFGSADHKVYYYDLR).

Interacts with COP1 and CO. Binds to CRY1 in response to blue light, this interaction prevents SPA1/COP1 complex formation and thus avoid COP1-dependent degradation of the transcription factor HY5 by the proteasome and promotes hypocotyl elongation.

The protein resides in the nucleus. Its function is as follows. Repressor of photomorphogenesis in the light. Probably part of the COP1/SPA E3 ubiquitin-protein ligase complex. The polypeptide is Protein SPA1-RELATED 4 (SPA4) (Arabidopsis thaliana (Mouse-ear cress)).